The primary structure comprises 125 residues: Holo-[acyl-carrier-protein] synthase (125 aa).

Residues Asp8 and Glu57 each coordinate Mg(2+).

It belongs to the P-Pant transferase superfamily. AcpS family. It depends on Mg(2+) as a cofactor.

Its subcellular location is the cytoplasm. It catalyses the reaction apo-[ACP] + CoA = holo-[ACP] + adenosine 3',5'-bisphosphate + H(+). Transfers the 4'-phosphopantetheine moiety from coenzyme A to a Ser of acyl-carrier-protein. The chain is Holo-[acyl-carrier-protein] synthase from Aromatoleum aromaticum (strain DSM 19018 / LMG 30748 / EbN1) (Azoarcus sp. (strain EbN1)).